We begin with the raw amino-acid sequence, 71 residues long: Protein PSY2 (71 aa).

The first 20 residues, 1 to 20, serve as a signal peptide directing secretion; the sequence is MSFGTRLLLFLILTLPLVTS. Residues 21–46 constitute a propeptide that is removed on maturation; the sequence is SSPNTLHVSGIVKTGTTSRFLMMTIE. Tyr48 bears the Sulfotyrosine mark. A disordered region spans residues 50-71; sequence DPSANTRHDPSVPTNAKADTTP. Positions 61-71 are enriched in polar residues; the sequence is VPTNAKADTTP. Pro62 bears the 4-hydroxyproline mark. The O-linked (Ara...) hydroxyproline glycan is linked to Pro62. The propeptide occupies 65–71; it reads AKADTTP.

Belongs to the sulfated-peptide plant hormone family. In terms of processing, the sulfation and the glycosylation are required for full activity.

Its subcellular location is the secreted. Promotes cellular proliferation and expansion. The chain is Protein PSY2 (PSY2) from Arabidopsis thaliana (Mouse-ear cress).